The sequence spans 106 residues: uncharacterized protein (106 aa).

Residues 1 to 22 form the signal peptide; it reads MKKHPNLLLGFSVYLSAGTKLT. Residues 23 to 46 form a disordered region; the sequence is IPPEAEQHTAPSDNNKRKRAKCDD.

This is an uncharacterized protein from Arabidopsis thaliana (Mouse-ear cress).